We begin with the raw amino-acid sequence, 328 residues long: DNA-directed RNA polymerase subunit alpha (328 aa).

The tract at residues 1–234 is alpha N-terminal domain (alpha-NTD); sequence MQTAVNEFLT…QQLAVFVDLE (234 aa). An alpha C-terminal domain (alpha-CTD) region spans residues 248-328; sequence IDPILLRPVD…NWPPASLKND (81 aa).

This sequence belongs to the RNA polymerase alpha chain family. As to quaternary structure, homodimer. The RNAP catalytic core consists of 2 alpha, 1 beta, 1 beta' and 1 omega subunit. When a sigma factor is associated with the core the holoenzyme is formed, which can initiate transcription.

The catalysed reaction is RNA(n) + a ribonucleoside 5'-triphosphate = RNA(n+1) + diphosphate. DNA-dependent RNA polymerase catalyzes the transcription of DNA into RNA using the four ribonucleoside triphosphates as substrates. The protein is DNA-directed RNA polymerase subunit alpha of Cellvibrio japonicus (strain Ueda107) (Pseudomonas fluorescens subsp. cellulosa).